A 93-amino-acid polypeptide reads, in one-letter code: Small ribosomal subunit protein uS19 (93 aa).

Belongs to the universal ribosomal protein uS19 family.

Its function is as follows. Protein S19 forms a complex with S13 that binds strongly to the 16S ribosomal RNA. This chain is Small ribosomal subunit protein uS19, found in Leptospira interrogans serogroup Icterohaemorrhagiae serovar copenhageni (strain Fiocruz L1-130).